Reading from the N-terminus, the 464-residue chain is Fumarate hydratase class II (464 aa).

Residues 100 to 102 (SGT), 131 to 134 (HPND), 141 to 143 (SSN), and Thr189 contribute to the substrate site. The active-site Proton donor/acceptor is His190. Ser320 is an active-site residue. Substrate-binding positions include Ser321 and 326–328 (KVN).

Belongs to the class-II fumarase/aspartase family. Fumarase subfamily. In terms of assembly, homotetramer.

It is found in the cytoplasm. It catalyses the reaction (S)-malate = fumarate + H2O. Its pathway is carbohydrate metabolism; tricarboxylic acid cycle; (S)-malate from fumarate: step 1/1. In terms of biological role, involved in the TCA cycle. Catalyzes the stereospecific interconversion of fumarate to L-malate. This is Fumarate hydratase class II from Deinococcus radiodurans (strain ATCC 13939 / DSM 20539 / JCM 16871 / CCUG 27074 / LMG 4051 / NBRC 15346 / NCIMB 9279 / VKM B-1422 / R1).